A 303-amino-acid polypeptide reads, in one-letter code: NAD kinase (303 aa).

D71 (proton acceptor) is an active-site residue. NAD(+) is bound by residues 71 to 72 (DG), 145 to 146 (ND), R156, R173, D175, 186 to 191 (TGYSLS), and Q245.

It belongs to the NAD kinase family. Requires a divalent metal cation as cofactor.

The protein localises to the cytoplasm. The catalysed reaction is NAD(+) + ATP = ADP + NADP(+) + H(+). Its function is as follows. Involved in the regulation of the intracellular balance of NAD and NADP, and is a key enzyme in the biosynthesis of NADP. Catalyzes specifically the phosphorylation on 2'-hydroxyl of the adenosine moiety of NAD to yield NADP. This is NAD kinase from Magnetococcus marinus (strain ATCC BAA-1437 / JCM 17883 / MC-1).